The sequence spans 391 residues: Homocysteine-responsive endoplasmic reticulum-resident ubiquitin-like domain member 1 protein (391 aa).

Methionine 1 is subject to N-acetylmethionine. At 1-263 (MESETEPEPV…VEEDDEINRD (263 aa)) the chain is on the cytoplasmic side. The region spanning 10-72 (VTLLVKSPNQ…LLDHQCLRDL (63 aa)) is the Ubiquitin-like domain. A disordered region spans residues 100–126 (KVAESTEEPAGSNRGQYPEDSSSDGLR). The segment covering 112 to 124 (NRGQYPEDSSSDG) has biased composition (polar residues). The segment at 115–200 (QYPEDSSSDG…ASGAFVPPPS (86 aa)) is interaction with UBQLN1. Position 135 is a phosphoserine (serine 135). The helical transmembrane segment at 264-284 (WLDWTYSAATFSVFLSILYFY) threads the bilayer. Over 285-289 (SSLSR) the chain is Lumenal. Residues 290–310 (FLMVMGATVVMYLHHVGWFPF) traverse the membrane as a helical segment. Topologically, residues 311-391 (RPRPVQNFPN…LPEGPPAIAN (81 aa)) are cytoplasmic. The tract at residues 318-359 (FPNDGPPPDIVNQDPNNNLQEGTDPETEDPNHVPPDRGVLDG) is disordered. Positions 346 to 357 (DPNHVPPDRGVL) are enriched in basic and acidic residues.

Interacts with PSEN1 and PSEN2. Interacts with UBXN6. Interacts with UBQLN1, UBQLN2 and UBQLN4. Component of the HRD1 complex, which comprises at least SYNV1/HRD1, FAM8A1, HERPUD1/HERP, OS9, SEL1L and UBE2J1. FAM8A1 binding to SYNV1 may promote recruitment of HERPUD1 to the HRD1 complex.

It localises to the endoplasmic reticulum membrane. Functionally, component of the endoplasmic reticulum quality control (ERQC) system also called ER-associated degradation (ERAD) involved in ubiquitin-dependent degradation of misfolded endoplasmic reticulum proteins. Binds to ubiquilins and this interaction is required for efficient degradation of CD3D via the ERAD pathway. This is Homocysteine-responsive endoplasmic reticulum-resident ubiquitin-like domain member 1 protein (HERPUD1) from Pongo abelii (Sumatran orangutan).